Consider the following 173-residue polypeptide: MSLLGPKVLLFLAAFIITSDWIPLGVNSQRGDDVTQATPETFTEDPNLVNDPATDETVLAVLADIAPSTDDLASLSEKNTTAECWDEKFTCTRLYSVHRPVKQCIHQLCFTSLRRMYIVNKEICSRLVCKEHEAMKDELCRQMAGLPPRRLRRSNYFRLPPCENVDLQRPNGL.

The signal sequence occupies residues 1–21 (MSLLGPKVLLFLAAFIITSDW). The short motif at 30 to 32 (RGD) is the Cell attachment site element. An O-linked (GalNAc...) threonine glycan is attached at T54. N-linked (GlcNAc...) asparagine glycosylation is present at N79.

The protein belongs to the MFAP family. Interacts with TGFB2. Interacts with BMP2. Interacts with FBN1 (via N-terminal domain) and FBN2. Post-translationally, forms intermolecular disulfide bonds either with other MAGP-2 molecules or with other components of the microfibrils. N- and O-glycosylated. O-glycosylated with core 1 or possibly core 8 glycans. O-glycan heterogeneity at Thr-54: HexHexNAc (major) and HexHexNAc + sulfate (minor).

The protein resides in the secreted. The protein localises to the extracellular space. Its subcellular location is the extracellular matrix. Its function is as follows. May play a role in hematopoiesis. In the cardiovascular system, could regulate growth factors or participate in cell signaling in maintaining large vessel integrity. Component of the elastin-associated microfibrils. The protein is Microfibrillar-associated protein 5 (MFAP5) of Homo sapiens (Human).